We begin with the raw amino-acid sequence, 147 residues long: Transcriptional repressor NrdR (147 aa).

A zinc finger lies at 3–34 (CPYCGNVETTVVETRESDEGDAVRRRRRCSAC). Residues 49–139 (PAVVKKNGDR…VYREFEDIDA (91 aa)) form the ATP-cone domain.

Belongs to the NrdR family. Requires Zn(2+) as cofactor.

In terms of biological role, negatively regulates transcription of bacterial ribonucleotide reductase nrd genes and operons by binding to NrdR-boxes. This Leptothrix cholodnii (strain ATCC 51168 / LMG 8142 / SP-6) (Leptothrix discophora (strain SP-6)) protein is Transcriptional repressor NrdR.